The sequence spans 423 residues: Sorting nexin-4 (423 aa).

Residues 1-21 (MTDKGKNDLTSKAKDKARGNP) are compositionally biased toward basic and acidic residues. A disordered region spans residues 1 to 25 (MTDKGKNDLTSKAKDKARGNPEKPP). In terms of domain architecture, PX spans 29-157 (EIIVSDPQKR…TFLVSKDWES (129 aa)). A 1,2-diacyl-sn-glycero-3-phospho-(1D-myo-inositol-3-phosphate)-binding residues include R78, S80, K104, and R123. Coiled coils occupy residues 217–252 (KKND…AKLK) and 346–381 (SRRE…ECLK).

It belongs to the sorting nexin family. Forms a complex with ATG20 and ATG17. Binds also to SNC1 and SNX41.

Its subcellular location is the cytoplasm. The protein localises to the cytosol. The protein resides in the preautophagosomal structure membrane. It localises to the endosome membrane. Functionally, sorting nexin, involved in the separation or division of vacuoles throughout the entire life cycle of the cells. Involved in retrieval of late-Golgi SNAREs from post-Golgi endosomes to the trans-Golgi network, for cytoplasm to vacuole transport (Cvt), and autophagy of large cargos including mitophagy, pexophagy and glycophagy. Involved in proper sorting of the v-SNARE protein SNC1. This chain is Sorting nexin-4, found in Saccharomyces cerevisiae (strain ATCC 204508 / S288c) (Baker's yeast).